The following is a 367-amino-acid chain: Probable protein phosphatase 2C 67 (367 aa).

Positions Met1–Val79 are disordered. The segment covering Ala31–Asn46 has biased composition (basic and acidic residues). A PPM-type phosphatase domain is found at Glu91–Phe365. Residues Asp131, Gly132, Asp312, and Asp356 each contribute to the Mn(2+) site.

The protein belongs to the PP2C family. It depends on Mg(2+) as a cofactor. Mn(2+) serves as cofactor.

It carries out the reaction O-phospho-L-seryl-[protein] + H2O = L-seryl-[protein] + phosphate. It catalyses the reaction O-phospho-L-threonyl-[protein] + H2O = L-threonyl-[protein] + phosphate. This chain is Probable protein phosphatase 2C 67, found in Oryza sativa subsp. japonica (Rice).